The following is a 394-amino-acid chain: Bifunctional enzyme IspD/IspF (394 aa).

The segment at 1–230 (MADTLAIVVA…AEALLGGGPV (230 aa)) is 2-C-methyl-D-erythritol 4-phosphate cytidylyltransferase. The 2-C-methyl-D-erythritol 2,4-cyclodiphosphate synthase stretch occupies residues 231 to 394 (LVGFGYDVHR…RIVLPGDRVL (164 aa)). Residues Asp-237 and His-239 each contribute to the a divalent metal cation site. Residues 237 to 239 (DVH) and 263 to 264 (HS) contribute to the 4-CDP-2-C-methyl-D-erythritol 2-phosphate site. Position 271 (His-271) interacts with a divalent metal cation. 4-CDP-2-C-methyl-D-erythritol 2-phosphate contacts are provided by residues 285-287 (DIG), 290-294 (FPDDD), 361-364 (TTTE), and Phe-368.

The protein in the N-terminal section; belongs to the IspD/TarI cytidylyltransferase family. IspD subfamily. In the C-terminal section; belongs to the IspF family. A divalent metal cation serves as cofactor.

The enzyme catalyses 2-C-methyl-D-erythritol 4-phosphate + CTP + H(+) = 4-CDP-2-C-methyl-D-erythritol + diphosphate. It catalyses the reaction 4-CDP-2-C-methyl-D-erythritol 2-phosphate = 2-C-methyl-D-erythritol 2,4-cyclic diphosphate + CMP. Its pathway is isoprenoid biosynthesis; isopentenyl diphosphate biosynthesis via DXP pathway; isopentenyl diphosphate from 1-deoxy-D-xylulose 5-phosphate: step 2/6. The protein operates within isoprenoid biosynthesis; isopentenyl diphosphate biosynthesis via DXP pathway; isopentenyl diphosphate from 1-deoxy-D-xylulose 5-phosphate: step 4/6. Bifunctional enzyme that catalyzes the formation of 4-diphosphocytidyl-2-C-methyl-D-erythritol from CTP and 2-C-methyl-D-erythritol 4-phosphate (MEP) (IspD), and catalyzes the conversion of 4-diphosphocytidyl-2-C-methyl-D-erythritol 2-phosphate (CDP-ME2P) to 2-C-methyl-D-erythritol 2,4-cyclodiphosphate (ME-CPP) with a corresponding release of cytidine 5-monophosphate (CMP) (IspF). In Desulforudis audaxviator (strain MP104C), this protein is Bifunctional enzyme IspD/IspF.